Reading from the N-terminus, the 536-residue chain is Organic anion transporter 3 (536 aa).

Over 1–11 (MTFSEILDRVG) the chain is Cytoplasmic. Residue S4 is modified to Phosphoserine. The helical transmembrane segment at 12 to 32 (SMGPFQYLHVTLLALPVLGIA) threads the bilayer. At 33-123 (NHNLLQIFTA…LVCSSNKLKE (91 aa)) the chain is on the extracellular side. 2 N-linked (GlcNAc...) asparagine glycosylation sites follow: N81 and N86. A helical transmembrane segment spans residues 124 to 144 (MAQSIFMAGILVGGPVIGELS). Over 145–158 (DRFGRKPILTWSYL) the chain is Cytoplasmic. Residues 159 to 179 (MLAASGSGAAFSPSLPVYMIF) form a helical membrane-spanning segment. Position 180 (R180) is a topological domain, extracellular. Residues 181-201 (FLCGCSISGISLSTVILNVEW) form a helical membrane-spanning segment. At 202-212 (VPTSMRAISST) the chain is on the cytoplasmic side. The chain crosses the membrane as a helical span at residues 213-233 (SIGYCYTIGQFILSGLAYAIP). Residues 234 to 236 (QWR) are Extracellular-facing. A helical membrane pass occupies residues 237–257 (WLQLTSSAPFFIFSLLSWWVP). Over 258–327 (ESIRWLVLSG…FRVSILRRVT (70 aa)) the chain is Cytoplasmic. The helical transmembrane segment at 328–348 (FCLSLAWFSTGFAYYSLAMGV) threads the bilayer. The Extracellular portion of the chain corresponds to 349–354 (EEFGVN). Residues 355–375 (IYILQIIFGGVDIPAKFITIL) traverse the membrane as a helical segment. The Cytoplasmic portion of the chain corresponds to 376–383 (SLSYLGRR). The chain crosses the membrane as a helical span at residues 384–404 (ITQSFLLLLAGGAILALIFVP). Topologically, residues 405 to 411 (SEMQLLR) are extracellular. A helical transmembrane segment spans residues 412-432 (TALAVFGKGCLSGSFSCLFLY). Over 433–471 (TSELYPTVLRQTGMGISNVWARVGSMIAPLVKITGELQP) the chain is Cytoplasmic. The chain crosses the membrane as a helical span at residues 472–492 (FIPNVIFGTTALLGGSAAFFL). Residues 493–536 (LETLNRPLPETIEDIQNWHKQVQKTKQESEAEKASQIIPLKTGG) lie on the Extracellular side of the membrane. Positions 515 to 536 (QKTKQESEAEKASQIIPLKTGG) are disordered.

Belongs to the major facilitator (TC 2.A.1) superfamily. Organic cation transporter (TC 2.A.1.19) family. Expressed in the liver, brain, kidney, choroid plexus and weakly in the eye. Moderately expressed (at protein level) in the brain capillary endothelial cells (BCEC).

The protein localises to the basolateral cell membrane. It carries out the reaction estrone 3-sulfate(out) + glutarate(in) = estrone 3-sulfate(in) + glutarate(out). The catalysed reaction is estrone 3-sulfate(in) + 2-oxoglutarate(out) = estrone 3-sulfate(out) + 2-oxoglutarate(in). The enzyme catalyses glutarate(in) + 2-oxoglutarate(out) = glutarate(out) + 2-oxoglutarate(in). It catalyses the reaction urate(in) + 2-oxoglutarate(out) = urate(out) + 2-oxoglutarate(in). It carries out the reaction taurocholate(out) + glutarate(in) = taurocholate(in) + glutarate(out). The catalysed reaction is dehydroepiandrosterone 3-sulfate(out) + glutarate(in) = dehydroepiandrosterone 3-sulfate(in) + glutarate(out). The enzyme catalyses prostaglandin F2alpha(out) + glutarate(in) = prostaglandin F2alpha(in) + glutarate(out). It catalyses the reaction prostaglandin F2alpha(out) + 2-oxoglutarate(in) = prostaglandin F2alpha(in) + 2-oxoglutarate(out). It carries out the reaction (R)-carnitine(out) + 2-oxoglutarate(in) = (R)-carnitine(in) + 2-oxoglutarate(out). The catalysed reaction is glutarate(in) + (R)-carnitine(out) = glutarate(out) + (R)-carnitine(in). The enzyme catalyses prostaglandin E2(out) + 2-oxoglutarate(in) = prostaglandin E2(in) + 2-oxoglutarate(out). It catalyses the reaction prostaglandin E2(out) + glutarate(in) = prostaglandin E2(in) + glutarate(out). It carries out the reaction urate(in) + glutarate(out) = urate(out) + glutarate(in). The catalysed reaction is taurocholate(out) + 2-oxoglutarate(in) = taurocholate(in) + 2-oxoglutarate(out). The enzyme catalyses dehydroepiandrosterone 3-sulfate(out) + 2-oxoglutarate(in) = dehydroepiandrosterone 3-sulfate(in) + 2-oxoglutarate(out). It catalyses the reaction kynurenate(out) + a dicarboxylate(in) = kynurenate(in) + a dicarboxylate(out). It carries out the reaction (indol-3-yl)acetate(out) + a dicarboxylate(in) = (indol-3-yl)acetate(in) + a dicarboxylate(out). The catalysed reaction is indoxyl sulfate(out) + a dicarboxylate(in) = indoxyl sulfate(in) + a dicarboxylate(out). The enzyme catalyses N-benzoylglycine(out) + a dicarboxylate(in) = N-benzoylglycine(in) + a dicarboxylate(out). It catalyses the reaction 3-carboxy-4-methyl-5-propyl-2-furanpropanoate(out) + a dicarboxylate(in) = 3-carboxy-4-methyl-5-propyl-2-furanpropanoate(in) + a dicarboxylate(out). It carries out the reaction (6R)-L-erythro-5,6,7,8-tetrahydrobiopterin(out) + a dicarboxylate(in) = (6R)-L-erythro-5,6,7,8-tetrahydrobiopterin(in) + a dicarboxylate(out). The catalysed reaction is L-erythro-7,8-dihydrobiopterin(out) + a dicarboxylate(in) = L-erythro-7,8-dihydrobiopterin(in) + a dicarboxylate(out). The enzyme catalyses L-sepiapterin(out) + a dicarboxylate(in) = L-sepiapterin(in) + a dicarboxylate(out). In terms of biological role, functions as an organic anion/dicarboxylate exchanger that couples organic anion uptake indirectly to the sodium gradient. Transports organic anions such as estrone 3-sulfate (E1S) and urate in exchange for dicarboxylates such as glutarate or ketoglutarate (2-oxoglutarate). Plays an important role in the excretion of endogenous and exogenous organic anions, especially from the kidney and the brain. E1S transport is pH- and chloride-dependent and may also involve E1S/cGMP exchange. Responsible for the transport of prostaglandin E2 (PGE2) and prostaglandin F2(alpha) (PGF2(alpha)) in the basolateral side of the renal tubule. Involved in the transport of neuroactive tryptophan metabolites kynurenate and xanthurenate. Functions as a biopterin transporters involved in the uptake and the secretion of coenzymes tetrahydrobiopterin (BH4), dihydrobiopterin (BH2) and sepiapterin to urine, thereby determining baseline levels of blood biopterins. May be involved in the basolateral transport of steviol, a metabolite of the popular sugar substitute stevioside. May participate in the detoxification/ renal excretion of drugs and xenobiotics, such as the histamine H(2)-receptor antagonists fexofenadine and cimetidine, the antibiotic benzylpenicillin (PCG), the anionic herbicide 2,4-dichloro-phenoxyacetate (2,4-D), the diagnostic agent p-aminohippurate (PAH), the antiviral acyclovir (ACV), and the mycotoxin ochratoxin (OTA), by transporting these exogenous organic anions across the cell membrane in exchange for dicarboxylates such as 2-oxoglutarate. Contributes to the renal uptake of potent uremic toxins (indoxyl sulfate (IS), indole acetate (IA), hippurate/N-benzoylglycine (HA) and 3-carboxy-4-methyl-5-propyl-2-furanpropionate (CMPF)), pravastatin, PCG, E1S and dehydroepiandrosterone sulfate (DHEAS), and is partly involved in the renal uptake of temocaprilat (an angiotensin-converting enzyme (ACE) inhibitor). May contribute to the release of cortisol in the adrenals. Involved in one of the detoxification systems on the choroid plexus (CP), removes substrates such as E1S or taurocholate (TC), PCG, 2,4-D and PAH, from the cerebrospinal fluid (CSF) to the blood for eventual excretion in urine and bile. Regulates the CSF concentration of histamine H(2)-receptor antagonists cimetidine and ranitidine at the CP. Also contributes to the uptake of several other organic compounds such as the prostanoids prostaglandin E(2) and prostaglandin F(2-alpha), L-carnitine, and the therapeutic drugs allopurinol, 6-mercaptopurine (6-MP) and 5-fluorouracil (5-FU). Mediates the uptake from brain of organic anions, such as E1S, PAH, and OTA. Mediates the transport of PAH, PCG, and the statins pravastatin and pitavastatin, from the cerebrum into the blood circulation across the blood-brain barrier (BBB). In summary, plays a role in the efflux of drugs and xenobiotics, helping reduce their undesired toxicological effects on the body. This Rattus norvegicus (Rat) protein is Organic anion transporter 3 (Slc22a8).